A 556-amino-acid polypeptide reads, in one-letter code: Tripartite motif-containing protein 16 (556 aa).

The interval 1 to 60 (MAELDLIAPGPLTGVTAHPLAPLGPDPVSAIPVEKEDADPLSKSGEETQEQGHDPAELGA) is disordered. Over residues 33–56 (VEKEDADPLSKSGEETQEQGHDPA) the composition is skewed to basic and acidic residues. 2 B box-type zinc fingers span residues 64–113 (EDQI…LTEP) and 117–156 (QDLRTCPAHHSPLVSFCHTHQQCICQECGEGEHRGDSTVS). A Phosphoserine modification is found at Ser107. Coiled-coil stretches lie at residues 163–266 (NKEV…RLAA) and 312–332 (NLIQLLESYKEKLQEFSREEE). A Phosphoserine modification is found at Ser195. The 199-residue stretch at 347–545 (YRTSKPEPRT…RIVDLGEEPE (199 aa)) folds into the B30.2/SPRY domain.

It belongs to the TRIM/RBCC family. As to quaternary structure, homodimerizes via its coiled-coil domain. Heterodimerizes with MID1, TRIM24 and PML. Interacts with Galectin-3/LGALS3 in a ULK1-dependent manner; this interaction mediates autophagy of damage endomembranes. Interacts with BECN1. Interacts with ATG16L1. Interacts with p62/SQSTM and LC3B/MAP1LC3B. Phosphorylated by ULK1. In terms of processing, auto-ubiquitinates via its B-Boxes. Widely expressed. Expressed in basal keratinocytes.

The protein resides in the cytoplasm. It catalyses the reaction S-ubiquitinyl-[E2 ubiquitin-conjugating enzyme]-L-cysteine + [acceptor protein]-L-lysine = [E2 ubiquitin-conjugating enzyme]-L-cysteine + N(6)-ubiquitinyl-[acceptor protein]-L-lysine.. In terms of biological role, E3 ubiquitin ligase that plays an essential role in the organization of autophagic response and ubiquitination upon lysosomal and phagosomal damages. Plays a role in the stress-induced biogenesis and degradation of protein aggresomes by regulating the p62-KEAP1-NRF2 signaling and particularly by modulating the ubiquitination levels and thus stability of NRF2. Acts as a scaffold protein and facilitates autophagic degradation of protein aggregates by interacting with p62/SQSTM, ATG16L1 and LC3B/MAP1LC3B. In turn, protects the cell against oxidative stress-induced cell death as a consequence of endomembrane damage. In Mus musculus (Mouse), this protein is Tripartite motif-containing protein 16 (Trim16).